We begin with the raw amino-acid sequence, 373 residues long: Zinc finger CCCH domain-containing protein 15 homolog (373 aa).

Residues 1-27 form a disordered region; that stretch reads MPPKQAQSKKTVEKEKKKKVEDKTFGL. Residues 10–25 show a composition bias toward basic and acidic residues; sequence KTVEKEKKKKVEDKTF. 2 C3H1-type zinc fingers span residues 95–123 and 167–205; these read DPKS…HDLA and KPTA…HCLP. Positions 252–326 form a coiled coil; that stretch reads KEEKRLQKEK…ALANQINTSL (75 aa). The interval 325–373 is disordered; that stretch reads SLFTDGGVLPSDDDDDDDDDDDDDEDGDDEEEDDDEEEGEYEEEEASDE. A compositionally biased stretch (acidic residues) spans 335-373; it reads SDDDDDDDDDDDDDEDGDDEEEDDDEEEGEYEEEEASDE.

Belongs to the ZC3H15/TMA46 family.

The polypeptide is Zinc finger CCCH domain-containing protein 15 homolog (Dictyostelium discoideum (Social amoeba)).